The chain runs to 653 residues: Structural protein ORF653 (653 aa).

Positions 300–330 (AKEETKQETKQETGKEEEEKKETKQESQEQL) form a coiled coil. Positions 302 to 326 (EETKQETKQETGKEEEEKKETKQES) are enriched in basic and acidic residues. 3 disordered regions span residues 302–329 (EETKQETKQETGKEEEEKKETKQESQEQ), 344–388 (GQPA…ENTP), and 626–653 (AGQQEETDETTEEEEEEEEEGNDTVKLS). Over residues 371 to 381 (EENNAEAPQQR) the composition is skewed to low complexity. A coiled-coil region spans residues 505–649 (KEQELYKELD…EEEEEEGNDT (145 aa)). The span at 630–647 (EETDETTEEEEEEEEEGN) shows a compositional bias: acidic residues.

Its subcellular location is the virion. This chain is Structural protein ORF653, found in Acidianus two-tailed virus (ATV).